Consider the following 270-residue polypeptide: Ribosomal RNA small subunit methyltransferase A (270 aa).

S-adenosyl-L-methionine contacts are provided by His11, Leu13, Gly38, Glu59, Asp84, and Asn109.

Belongs to the class I-like SAM-binding methyltransferase superfamily. rRNA adenine N(6)-methyltransferase family. RsmA subfamily.

The protein localises to the cytoplasm. It carries out the reaction adenosine(1518)/adenosine(1519) in 16S rRNA + 4 S-adenosyl-L-methionine = N(6)-dimethyladenosine(1518)/N(6)-dimethyladenosine(1519) in 16S rRNA + 4 S-adenosyl-L-homocysteine + 4 H(+). Specifically dimethylates two adjacent adenosines (A1518 and A1519) in the loop of a conserved hairpin near the 3'-end of 16S rRNA in the 30S particle. May play a critical role in biogenesis of 30S subunits. The protein is Ribosomal RNA small subunit methyltransferase A of Crocosphaera subtropica (strain ATCC 51142 / BH68) (Cyanothece sp. (strain ATCC 51142)).